The sequence spans 308 residues: Elongation factor Ts (308 aa).

Positions 80 to 83 (TDFV) are involved in Mg(2+) ion dislocation from EF-Tu.

This sequence belongs to the EF-Ts family.

It localises to the cytoplasm. Its function is as follows. Associates with the EF-Tu.GDP complex and induces the exchange of GDP to GTP. It remains bound to the aminoacyl-tRNA.EF-Tu.GTP complex up to the GTP hydrolysis stage on the ribosome. The polypeptide is Elongation factor Ts (Rhizobium rhizogenes (strain K84 / ATCC BAA-868) (Agrobacterium radiobacter)).